Here is a 443-residue protein sequence, read N- to C-terminus: MKNIDVQQLTNQFPLVQSLIALEPVTWFNPKASTLAVGLPYVGLDGSDVADASARLARFAPYMCEAFPETRASKGILESEIVAIPAMQATLNTRYGVEVTGKLLLKKDSHLPISGSIKARGGIYEVLTHAEQLAIKAGLLCEEDDYRKLFSEEFRQFFGQYSIAVGSTGNLGMSIGIMSAKLGFTVTVHMSADAREWKKRKLREHGVIVVEYAEDYGVAVEQGRKEAERDPNCFFIDDENSRTLFLGYSVAGERVKTQFDQMGIKVDAEHPLFVYLPCGVGGGPGGVAFGLKLAFGDNVHCLFAEPTHSPCMLLGVHTGLHDQISVQDLGIDNLTAADGLAVGRASGFVGRAMERLLDGFYTLSDQEMYDLLGLLARDEQIKLEPSALAGMPGPWRIAADREWQTERGFDAATLARATHLVWATGGGMVPAEEMEKYLATAEI.

An N6-(pyridoxal phosphate)lysine modification is found at Lys118.

Belongs to the serine/threonine dehydratase family. DsdA subfamily. Pyridoxal 5'-phosphate is required as a cofactor.

The catalysed reaction is D-serine = pyruvate + NH4(+). The polypeptide is Probable D-serine dehydratase (Aeromonas salmonicida (strain A449)).